Consider the following 194-residue polypeptide: Orotate phosphoribosyltransferase (194 aa).

117–125 (EDVVTTGLS) contributes to the 5-phospho-alpha-D-ribose 1-diphosphate binding site. The orotate site is built by Thr-121 and Arg-149.

The protein belongs to the purine/pyrimidine phosphoribosyltransferase family. PyrE subfamily. As to quaternary structure, homodimer. Requires Mg(2+) as cofactor.

The catalysed reaction is orotidine 5'-phosphate + diphosphate = orotate + 5-phospho-alpha-D-ribose 1-diphosphate. It functions in the pathway pyrimidine metabolism; UMP biosynthesis via de novo pathway; UMP from orotate: step 1/2. In terms of biological role, catalyzes the transfer of a ribosyl phosphate group from 5-phosphoribose 1-diphosphate to orotate, leading to the formation of orotidine monophosphate (OMP). The polypeptide is Orotate phosphoribosyltransferase (Novosphingobium aromaticivorans (strain ATCC 700278 / DSM 12444 / CCUG 56034 / CIP 105152 / NBRC 16084 / F199)).